We begin with the raw amino-acid sequence, 266 residues long: Putative deoxyribonuclease tatdn3 (266 aa).

Positions 9, 11, 103, 143, 166, and 214 each coordinate Zn(2+).

This sequence belongs to the metallo-dependent hydrolases superfamily. TatD-type hydrolase family. It depends on Mn(2+) as a cofactor. The cofactor is Ca(2+). Mg(2+) serves as cofactor. Requires Zn(2+) as cofactor.

The protein resides in the nucleus. The 3'-exonuclease activity is sensitive to the metal ion present in the active site, whereas the AP endodeoxyribonuclease activity is observed in a variety of divalent metal cofactors. 3'-exoxonuclease activity is suppressed in the presence of Ca(2+), Zn(2+) and Ni(2+). Functionally, exhibits 3'-exonuclease activities and apurinic/apyrimidinic (AP) endonuclease (in vitro). Show preferential AP endonuclease activity on double-stranded DNA substrates and 3'- exonuclease activity on single-stranded DNA. In Danio rerio (Zebrafish), this protein is Putative deoxyribonuclease tatdn3 (tatdn3).